The chain runs to 37 residues: EALADPIADPVAGPNPEADPEAINLKAIAAFAKKLLG.

The propeptide occupies 1–22 (EALADPIADPVAGPNPEADPEA). 4 AXPX repeats span residues 4-7 (ADPI), 8-11 (ADPV), 12-15 (AGPN), and 18-21 (ADPE). Leu-36 bears the Leucine amide mark.

Belongs to the MCD family. Mastoparan subfamily. Expressed by the venom gland.

The protein localises to the secreted. It localises to the target cell membrane. Functionally, antimicrobial peptide with potent activity against both Gram-positive (S.aureus MIC=50 ug/ml, and B.subtilis MIC=25 ug/ml) and Gram-negative bacteria (P.aeruginosa MIC=25 ug/ml, E.coli MIC=3-50 ug/ml, K.pneumoniae MIC=25 ug/ml). Exhibits little hemolytic activity on human erythrocytes. The protein is Mastoparan-VT of Vespa tropica (Greater banded hornet).